Reading from the N-terminus, the 1226-residue chain is MRAVLRLLSTHTVFSPIETIVSVFVLATLAYFHILSGIKHSSFFASSHPPAIRPAFAHLTNGEWVAVSQHDWTEAWKHPGGSLDALELQQVVFTLDDKTQPSAVLDASAISQHLVSNVPALSGKAYSSLCHHPNVSGTSCFTSVSGPGASPILTLSFKPGTRDDWLGSLRKEKTITLDGVKYDVGAGKRQESIGDMESSKWVAYALSALVLRFWELTKADSLDILVVLTGYILMHVTFMRLFLASRALGSNFWLSAGIFSSATISFLFTLPMCRSMDIPLDPIALTEALPFLVCTVGFDKPLRLARAVMAHPNILKPQDDGRMKAAGDVILEALDRVGNMILRDYALEIAVLFVGVNSRVGGLKEFCAVAAALLAMDRLMTFTLYTAVLTIMVEVRRIKKVRDMTKARSRSSSITAVTANGTAIRGVLSRKSSKQSVTEPETTKNLRQRATDSAIGVKGSLLKDGGRLQEAEENPMARLKLLLIASFLTLHILNFCTTLTSATANARHQRHPFRTVQEVVPIPRVDITTPAIANILSHLAVAQEPMFTVVGSEPIELLVKVAAPVYVHALPLAPALRASNTNTGEAIENFMSSWSSLVGDPVVSKWIVALLAVSVALNGYLLKGIAAGSGLAAMRAVRSQGVRFRSRARSIVKISDEPEPEPEHSIDPAPVVFFASAAPAVEAPAPAPAPEPEPPVNRPPPLTIFSRPLNLETVDKKLQDALPIRSPPPVEPITPESREVEPTQVEVRSLAECVDVFENGPRPVSVALKTLNDEEVILLCQTGKIAPYALVKMLADFDRAVRVRRALISRASRTKTLENSLVPMKDYDYARVMGACCENVIGYMPLPLGIAGPLKIDGLMYPIPMATAEGTLVASTSRGCKALNAGGGVTTVLTADGMTRGPAIDFPSIVRAAEAKAFIESEDGYATIREAFESTSRFAKLQKIKCALAGRTLFVRFATRTGDAMGMNMISKATEKALDVLSHEFPEMVVLALSGNYCTDKKPAAISWIEGRGKSIVAEAVIPGKVVKSVLKTTVESLCNVNTKKNLIGSAMAGSVGGFNAHAANILTAVFLATGQDPAQNVESSNCMTLMEPTNGGEDLLMTISMPCIEVGTVGGGTILEPQGAVLDLLGVRGAHPTNPGQNAQQLARIIASAVMAGELSLISALAAGHLVRAHLAHNRSQLNTPMPSRPHTPGPEDVSHVQQLPTPSASDDKGVTAQGYVVEAK.

Transmembrane regions (helical) follow at residues 17–37, 224–244, 252–272, 337–357, and 373–393; these read IETI…ILSG, ILVV…LFLA, FWLS…TLPM, VGNM…VGVN, and LLAM…TIMV. Positions 223 to 391 constitute an SSD domain; it reads DILVVLTGYI…FTLYTAVLTI (169 aa). Residues 428-449 are disordered; it reads LSRKSSKQSVTEPETTKNLRQR. Residues 434-445 are compositionally biased toward polar residues; that stretch reads KQSVTEPETTKN. The helical transmembrane segment at 481–501 threads the bilayer; it reads LLLIASFLTLHILNFCTTLTS. 2 disordered regions span residues 683-702 and 722-742; these read APAP…PPPL and LPIR…EVEP. Residues 685-702 show a composition bias toward pro residues; sequence APAPAPEPEPPVNRPPPL. Glutamate 869 (charge relay system) is an active-site residue. Residue 875–881 participates in CoA binding; the sequence is STSRGCK. NADP(+) contacts are provided by residues 936 to 938 and 963 to 971; these read SRF and DAMGMNMIS. Lysine 1001 acts as the Charge relay system in catalysis. 1030–1032 is a CoA binding site; that stretch reads VLK. The active-site Charge relay system is aspartate 1077. The chain crosses the membrane as a helical span at residues 1150-1170; the sequence is IIASAVMAGELSLISALAAGH. 1174–1175 provides a ligand contact to CoA; sequence AH. The active-site Proton donor is histidine 1175. 1179–1180 serves as a coordination point for NADP(+); the sequence is NR. Residues 1182-1226 are disordered; that stretch reads QLNTPMPSRPHTPGPEDVSHVQQLPTPSASDDKGVTAQGYVVEAK. A compositionally biased stretch (polar residues) spans 1201-1210; the sequence is HVQQLPTPSA.

This sequence belongs to the HMG-CoA reductase family.

It localises to the endoplasmic reticulum membrane. It catalyses the reaction (R)-mevalonate + 2 NADP(+) + CoA = (3S)-3-hydroxy-3-methylglutaryl-CoA + 2 NADPH + 2 H(+). It functions in the pathway metabolic intermediate biosynthesis; (R)-mevalonate biosynthesis; (R)-mevalonate from acetyl-CoA: step 3/3. HMG-CoA reductase; part of the first module of ergosterol biosynthesis pathway that includes the early steps of the pathway, conserved across all eukaryotes, and which results in the formation of mevalonate from acetyl-coenzyme A (acetyl-CoA). This module also plays a key role in the biosynthesis of triterpenes such as ganoderic acids (GA), a group of highly oxygenated lanostane-type triterpenoids which are well recognized as a main group of unique bioactive compounds in the medicinal mushroom Ganoderma lucidum. In this module, the acetyl-CoA acetyltransferase catalyzes the formation of acetoacetyl-CoA. The hydroxymethylglutaryl-CoA synthase HMGS then condenses acetyl-CoA with acetoacetyl-CoA to form HMG-CoA. The rate-limiting step of the early module is the reduction to mevalonate by the 3-hydroxy-3-methylglutaryl-coenzyme A (HMG-CoA) reductase. The chain is 3-hydroxy-3-methylglutaryl-coenzyme A reductase from Ganoderma lucidum (Ling zhi medicinal fungus).